Here is a 308-residue protein sequence, read N- to C-terminus: MAAKPEQEPVYVRDLVKDYDDARQMLTQAGVSEAVLGTIDAEIKHIKTGSRPKTVPNTDGSGFMDLYNDTKVKLVSRCCLPVDQFPKYNFLGKLLGPGGSTMKQLQDETMTKISILGRGSMRDRNKEEELRNSGDVKYAHLNEQLHIEIISIASPAEAHARMAYALTEIKKYITPEEDPNYMMMAGHGAGPMMGMGGMMGGPGPMGPQGRGRGRGRGGFSGPDRTFDLLEKARMNTSETMDPGYGFDESYCGMGGGYEMPYNGNAGWTASPGRGAGAGARGARGGLDQSRGGGKFPSARGGRGRAAPY.

The KH domain maps to 83–118 (DQFPKYNFLGKLLGPGGSTMKQLQDETMTKISILGR). 2 stretches are compositionally biased toward gly residues: residues 203–220 (GPMG…GGFS) and 273–294 (RGAG…GGGK). Disordered stretches follow at residues 203–222 (GPMG…FSGP) and 270–308 (SPGR…AAPY).

Post-translationally, the arginines in the Gly-rich domain might be methylated.

The sequence is that of Glycine-rich protein GRP33 from Artemia salina (Brine shrimp).